Reading from the N-terminus, the 285-residue chain is Bifunctional protein FolD 2 (285 aa).

Residues 164 to 166 (GRS), serine 189, and valine 230 contribute to the NADP(+) site.

It belongs to the tetrahydrofolate dehydrogenase/cyclohydrolase family. In terms of assembly, homodimer.

It catalyses the reaction (6R)-5,10-methylene-5,6,7,8-tetrahydrofolate + NADP(+) = (6R)-5,10-methenyltetrahydrofolate + NADPH. The enzyme catalyses (6R)-5,10-methenyltetrahydrofolate + H2O = (6R)-10-formyltetrahydrofolate + H(+). The protein operates within one-carbon metabolism; tetrahydrofolate interconversion. Functionally, catalyzes the oxidation of 5,10-methylenetetrahydrofolate to 5,10-methenyltetrahydrofolate and then the hydrolysis of 5,10-methenyltetrahydrofolate to 10-formyltetrahydrofolate. This is Bifunctional protein FolD 2 from Geobacter metallireducens (strain ATCC 53774 / DSM 7210 / GS-15).